The following is a 148-amino-acid chain: Wheatwin-2 (148 aa).

Residues 1 to 23 form the signal peptide; that stretch reads MTMAARLMLVAALLCAAAAAATA. The residue at position 24 (glutamine 24) is a Pyrrolidone carboxylic acid. The region spanning 24 to 148 is the Barwin domain; that stretch reads QQATNVRATY…VNYQFVDCRD (125 aa). Intrachain disulfides connect cysteine 54/cysteine 86, cysteine 75/cysteine 109, and cysteine 89/cysteine 146.

Monomer.

Shows antifungal activity towards B.cinerea and towards the wheat-specific pathogenic fungi F.culmorum and F.graminearum (groups 1 and 2). The sequence is that of Wheatwin-2 (PR4B) from Triticum aestivum (Wheat).